We begin with the raw amino-acid sequence, 45 residues long: Conotoxin reg3.12 (45 aa).

A propeptide spanning residues 1-31 (DQPVERHAGNKRHLNPTIRRAMIIDANRREK) is cleaved from the precursor. 3 cysteine pairs are disulfide-bonded: Cys32–Cys44, Cys33–Cys42, and Cys38–Cys45.

This sequence belongs to the conotoxin M superfamily. Expressed by the venom duct.

The protein resides in the secreted. This is Conotoxin reg3.12 from Conus regius (Crown cone).